Here is a 528-residue protein sequence, read N- to C-terminus: GMP synthase [glutamine-hydrolyzing] (528 aa).

The Glutamine amidotransferase type-1 domain occupies lysine 3–aspartate 199. Cysteine 83 (nucleophile) is an active-site residue. Active-site residues include histidine 174 and glutamate 176. Residues tryptophan 200–arginine 394 enclose the GMPS ATP-PPase domain. Serine 227–serine 233 is an ATP binding site.

As to quaternary structure, homodimer.

It catalyses the reaction XMP + L-glutamine + ATP + H2O = GMP + L-glutamate + AMP + diphosphate + 2 H(+). The protein operates within purine metabolism; GMP biosynthesis; GMP from XMP (L-Gln route): step 1/1. Catalyzes the synthesis of GMP from XMP. The polypeptide is GMP synthase [glutamine-hydrolyzing] (Ehrlichia ruminantium (strain Welgevonden)).